Here is a 465-residue protein sequence, read N- to C-terminus: Glutamate--tRNA ligase (465 aa).

Residues 10–20 carry the 'HIGH' region motif; that stretch reads PSPTGQLHIGG. Zn(2+) contacts are provided by Cys-99, Cys-101, Cys-126, and Glu-128. The short motif at 236-240 is the 'KMSKS' region element; sequence KLSKR. Lys-239 lines the ATP pocket.

The protein belongs to the class-I aminoacyl-tRNA synthetase family. Glutamate--tRNA ligase type 1 subfamily. Monomer. Zn(2+) is required as a cofactor.

It localises to the cytoplasm. It carries out the reaction tRNA(Glu) + L-glutamate + ATP = L-glutamyl-tRNA(Glu) + AMP + diphosphate. In terms of biological role, catalyzes the attachment of glutamate to tRNA(Glu) in a two-step reaction: glutamate is first activated by ATP to form Glu-AMP and then transferred to the acceptor end of tRNA(Glu). This Lawsonia intracellularis (strain PHE/MN1-00) protein is Glutamate--tRNA ligase.